The following is a 30-amino-acid chain: Cyclotide cter-G (30 aa).

Residues 1–30 (GLPCGESCVFIPCITTVVGCSCKNKVCYNN) constitute a cross-link (cyclopeptide (Gly-Asn)). 3 cysteine pairs are disulfide-bonded: Cys-4-Cys-20, Cys-8-Cys-22, and Cys-13-Cys-27.

Post-translationally, contains 3 disulfide bonds. This is a cyclic peptide.

Probably participates in a plant defense mechanism. The sequence is that of Cyclotide cter-G from Clitoria ternatea (Butterfly pea).